The chain runs to 97 residues: UPF0390 protein CNBD1430 (97 aa).

2 disordered regions span residues 1–57 and 75–97; these read MAQG…INNS and RNVGELESGEGKDGKAKGKGKSR. Basic and acidic residues predominate over residues 29-46; sequence GKREVAPKDRQRVLERSQ. The segment covering 48–57 has biased composition (polar residues); the sequence is KQLSSKINNS.

Belongs to the UPF0390 family.

In Cryptococcus neoformans var. neoformans serotype D (strain B-3501A) (Filobasidiella neoformans), this protein is UPF0390 protein CNBD1430.